Consider the following 121-residue polypeptide: Small ribosomal subunit protein uS13 (121 aa).

Residues 96-121 (PVRGQNTKNNARTRKGKAVAIAGKKK) are disordered. The span at 106-121 (ARTRKGKAVAIAGKKK) shows a compositional bias: basic residues.

Belongs to the universal ribosomal protein uS13 family. In terms of assembly, part of the 30S ribosomal subunit. Forms a loose heterodimer with protein S19. Forms two bridges to the 50S subunit in the 70S ribosome.

In terms of biological role, located at the top of the head of the 30S subunit, it contacts several helices of the 16S rRNA. In the 70S ribosome it contacts the 23S rRNA (bridge B1a) and protein L5 of the 50S subunit (bridge B1b), connecting the 2 subunits; these bridges are implicated in subunit movement. Contacts the tRNAs in the A and P-sites. The protein is Small ribosomal subunit protein uS13 of Streptococcus pyogenes serotype M3 (strain SSI-1).